Here is a 37-residue protein sequence, read N- to C-terminus: Esculentin-2L (37 aa).

Cysteine 31 and cysteine 37 are joined by a disulfide.

As to expression, expressed by the skin glands.

It is found in the secreted. In terms of biological role, antibacterial activity against Gram-positive bacterium S.aureus and Gram-negative bacterium E.coli. Has activity against C.albicans. This chain is Esculentin-2L, found in Rana luteiventris (Columbia spotted frog).